Consider the following 287-residue polypeptide: tRNA selenocysteine 1-associated protein 1 (287 aa).

2 RRM domains span residues 3-86 (ASLW…YVTY) and 96-175 (YSLF…VAIP).

The protein belongs to the RRM TRSPAP family. As to quaternary structure, component of the tRNA(Sec) complex composed at least of EEFSEC, SECISBP2, SEPHS1, SEPSECS, TRNAU1AP and tRNA(Sec). Found in a complex with tRNA(Sec). Interacts with SEPSECS. Associates with mRNP and/or polysomes. Found in a complex with EEFSEC, SECISBP2, TRNAU1AP and tRNA(Sec).

It is found in the nucleus. The protein localises to the cytoplasm. Involved in the early steps of selenocysteine biosynthesis and tRNA(Sec) charging to the later steps resulting in the cotranslational incorporation of selenocysteine into selenoproteins. Stabilizes the SECISBP2, EEFSEC and tRNA(Sec) complex. May be involved in the methylation of tRNA(Sec). Enhances efficiency of selenoproteins synthesis. In Pongo abelii (Sumatran orangutan), this protein is tRNA selenocysteine 1-associated protein 1 (TRNAU1AP).